A 320-amino-acid polypeptide reads, in one-letter code: F-box protein At2g02240 (320 aa).

The F-box domain maps to 58–104 (TSPFDVLPEDCISNIISFTSPRDACVAASVSKTFESAVSSDCVWDKF).

This Arabidopsis thaliana (Mouse-ear cress) protein is F-box protein At2g02240.